A 266-amino-acid chain; its full sequence is Indole-3-glycerol phosphate synthase (266 aa).

This sequence belongs to the TrpC family.

The enzyme catalyses 1-(2-carboxyphenylamino)-1-deoxy-D-ribulose 5-phosphate + H(+) = (1S,2R)-1-C-(indol-3-yl)glycerol 3-phosphate + CO2 + H2O. Its pathway is amino-acid biosynthesis; L-tryptophan biosynthesis; L-tryptophan from chorismate: step 4/5. This chain is Indole-3-glycerol phosphate synthase, found in Herminiimonas arsenicoxydans.